Consider the following 432-residue polypeptide: CinA-like protein (432 aa).

It belongs to the CinA family.

This chain is CinA-like protein, found in Colwellia psychrerythraea (strain 34H / ATCC BAA-681) (Vibrio psychroerythus).